We begin with the raw amino-acid sequence, 351 residues long: Pentatricopeptide repeat-containing protein At2g40240, mitochondrial (351 aa).

The N-terminal 27 residues, 1–27, are a transit peptide targeting the mitochondrion; it reads MSLLRRRFVKQSVNCITFLQILAERSF. 6 PPR repeats span residues 106–140, 141–175, 176–210, 211–245, 246–280, and 281–315; these read RKNA…RLGL, TPST…SVSM, DVTA…GNSP, DSRS…GVTV, LYST…DLRL, and DSES…GLRM.

Belongs to the PPR family. P subfamily.

It localises to the mitochondrion. This chain is Pentatricopeptide repeat-containing protein At2g40240, mitochondrial, found in Arabidopsis thaliana (Mouse-ear cress).